The following is a 315-amino-acid chain: Homoserine O-succinyltransferase (315 aa).

C142 serves as the catalytic Acyl-thioester intermediate. Positions 163 and 192 each coordinate substrate. H235 serves as the catalytic Proton acceptor. E237 is an active-site residue. R249 provides a ligand contact to substrate.

Belongs to the MetA family.

The protein resides in the cytoplasm. It catalyses the reaction L-homoserine + succinyl-CoA = O-succinyl-L-homoserine + CoA. Its pathway is amino-acid biosynthesis; L-methionine biosynthesis via de novo pathway; O-succinyl-L-homoserine from L-homoserine: step 1/1. Functionally, transfers a succinyl group from succinyl-CoA to L-homoserine, forming succinyl-L-homoserine. The chain is Homoserine O-succinyltransferase from Tolumonas auensis (strain DSM 9187 / NBRC 110442 / TA 4).